The chain runs to 363 residues: tRNA dimethylallyltransferase (363 aa).

65–72 (GPTASGKS) lines the ATP pocket. Residue 67–72 (TASGKS) coordinates substrate. Interaction with substrate tRNA regions lie at residues 90 to 93 (DSMQ) and 214 to 218 (QRLIR).

It belongs to the IPP transferase family. Monomer. Mg(2+) serves as cofactor.

The enzyme catalyses adenosine(37) in tRNA + dimethylallyl diphosphate = N(6)-dimethylallyladenosine(37) in tRNA + diphosphate. Catalyzes the transfer of a dimethylallyl group onto the adenine at position 37 in tRNAs that read codons beginning with uridine, leading to the formation of N6-(dimethylallyl)adenosine (i(6)A). In Rickettsia rickettsii (strain Sheila Smith), this protein is tRNA dimethylallyltransferase.